The following is a 130-amino-acid chain: Small ribosomal subunit protein uS11c (130 aa).

The protein belongs to the universal ribosomal protein uS11 family. As to quaternary structure, part of the 30S ribosomal subunit.

Its subcellular location is the plastid. It localises to the chloroplast. The chain is Small ribosomal subunit protein uS11c from Drimys granadensis.